Consider the following 154-residue polypeptide: Transcriptional repressor NrdR (154 aa).

Residues 3-34 (CPFCGNVDTQVKDSRPAEDNVAIRRRRFCPAC) fold into a zinc finger. The 91-residue stretch at 49–139 (LVVVKSSGRR…VYKNFQAADD (91 aa)) folds into the ATP-cone domain.

The protein belongs to the NrdR family. Zn(2+) is required as a cofactor.

In terms of biological role, negatively regulates transcription of bacterial ribonucleotide reductase nrd genes and operons by binding to NrdR-boxes. In Paracoccus denitrificans (strain Pd 1222), this protein is Transcriptional repressor NrdR.